We begin with the raw amino-acid sequence, 220 residues long: Ribosomal RNA small subunit methyltransferase Nep1 (220 aa).

S-adenosyl-L-methionine-binding positions include Gly-178, Gly-183, and 196 to 201; that span reads LYREPL.

This sequence belongs to the class IV-like SAM-binding methyltransferase superfamily. RNA methyltransferase NEP1 family. As to quaternary structure, homodimer.

The enzyme catalyses a pseudouridine in rRNA + S-adenosyl-L-methionine = an N(1)-methylpseudouridine in rRNA + S-adenosyl-L-homocysteine + H(+). In terms of biological role, methyltransferase involved in ribosomal biogenesis. Specifically catalyzes the N1-methylation of the pseudouridine corresponding to position 914 in M.jannaschii 16S rRNA. This is Ribosomal RNA small subunit methyltransferase Nep1 from Thermococcus kodakarensis (strain ATCC BAA-918 / JCM 12380 / KOD1) (Pyrococcus kodakaraensis (strain KOD1)).